The primary structure comprises 135 residues: Serine protease inhibitor swm-1 (135 aa).

Residues 1-16 form the signal peptide; sequence MRILVIITCIVAVATA. Intrachain disulfides connect C20-C53, C29-C48, C33-C44, C37-C73, C55-C67, C80-C114, C89-C109, C93-C105, C97-C133, and C116-C127. TIL domains follow at residues 20–73 and 80–133; these read CEAN…VSEC and CPEN…KKDC. N-linked (GlcNAc...) asparagine glycosylation occurs at N83.

In male, expressed in the vas deferens cuboidal cells and, in posterior body wall and male-specific diagonal muscles. In hermaphrodites, expressed in posterior body wall muscles and spermatheca.

It is found in the secreted. The protein resides in the cytoplasmic vesicle. Its subcellular location is the secretory vesicle lumen. Functionally, serine protease inhibitor. Probably by inhibiting serine protease tyr-5 in males, prevents the maturation of spermatids into mature motile spermatozoa until their transfer into a hermaphrodite. Also required for efficient sperm transfer and thus for male fertility. The polypeptide is Serine protease inhibitor swm-1 (Caenorhabditis elegans).